Here is a 1167-residue protein sequence, read N- to C-terminus: Putative structural protein VP3 (1167 aa).

The protein is Putative structural protein VP3 (S3) of Fiji disease virus (isolate Sugarcane) (FDV).